The sequence spans 515 residues: MLEKLSFLLHKFPLVSKCGFIKKLASESSNDSNIIRIPDFPGGAEGFELVIKFCYDISFEINTENIAMLLCAAEYLEMTEEHSVENLVETIEVYLNEVILKSLSKSVKVLQKSQDLLPIAERVRLVDRCIDSIAYAICQESQSNEDIVDWWADDLAVLKIDMFRRVLVAMIARGFKRYSLGPVLKLYAEKALRGLDIFGKEAKKMEAEQEHEKRLILETIVSLLPRERNSVSVSFLSILLRAAIYLETTVACRLDLEKRMGLQLRQAVIDDLLIPYYSFNGDNTMLDVDTVQRILMNYLEFEVEGNSADFASDIGELMETYLAEIASDRNINFAKFIGFAECIPKQSRMYRAIDIFLKTHPNISEVEKKKVCSLMDCKKLSRDVYAHAAQNDRFQENLSNSDSPAPATAEKTLSPPELSSYKNELSKLNRENQYLKLELLKVKMKFKELEKEKAFEVMSGSDCSSSVSTASVAKPRLPRKSFINSVSQKLGKLINPFGLKQGQTKQPKSRRHSIS.

The 63-residue stretch at 1–63 (MLEKLSFLLH…CYDISFEINT (63 aa)) folds into the BTB domain. In terms of domain architecture, NPH3 spans 149-409 (DWWADDLAVL…NSDSPAPATA (261 aa)). Tyr350 is subject to Phosphotyrosine. The interval 395–417 (QENLSNSDSPAPATAEKTLSPPE) is disordered. Residues 418 to 452 (LSSYKNELSKLNRENQYLKLELLKVKMKFKELEKE) adopt a coiled-coil conformation. The segment at 494–515 (INPFGLKQGQTKQPKSRRHSIS) is disordered.

This sequence belongs to the NPH3 family.

Its pathway is protein modification; protein ubiquitination. Its function is as follows. May act as a substrate-specific adapter of an E3 ubiquitin-protein ligase complex (CUL3-RBX1-BTB) which mediates the ubiquitination and subsequent proteasomal degradation of target proteins. The chain is Putative BTB/POZ domain-containing protein At3g49970 from Arabidopsis thaliana (Mouse-ear cress).